The sequence spans 629 residues: Methyl-accepting chemotaxis protein PscA (629 aa).

The Cytoplasmic portion of the chain corresponds to 1–9; it reads MKNLGFSKK. A helical membrane pass occupies residues 10-30; it reads ILLAAALIVVVAFSVFIVIND. The Periplasmic portion of the chain corresponds to 31–276; sequence YRQRQSLKSS…AYAMLTEFRT (246 aa). Residues 36-258 enclose the Cache domain; it reads SLKSSVKSEL…QGVATANWYV (223 aa). Residues 277–297 traverse the membrane as a helical segment; it reads SAITAMVVVVMVIILLLGPLI. One can recognise an HAMP domain in the interval 298-352; it reads RVLMQPLHQMGRAMRDIADGEGDLTKRLAITSHDEFGALAESFNHFVERIHTSIR. The Cytoplasmic segment spans residues 298 to 629; sequence RVLMQPLHQM…LQQLVGSFRI (332 aa). The 237-residue stretch at 357–593 folds into the Methyl-accepting transducer domain; it reads TAAQLGEVAT…SINVDITHIN (237 aa).

The protein belongs to the methyl-accepting chemotaxis (MCP) protein family.

The protein resides in the cell inner membrane. Functionally, chemotactic-signal transducers respond to changes in the concentration of attractants and repellents in the environment, transduce a signal from the outside to the inside of the cell, and facilitate sensory adaptation through the variation of the level of methylation. PscA recognizes specifically and with high affinity L-Asp, D-Asp and L-Glu. It exerts a double function, in mediating chemotaxis to these amino acids and in modulating cyclic di-GMP (c-di-GMP) levels, causing alterations in biofilm development. Plays a key role in the infection process. It may facilitate bacterial entry into the plant. This is Methyl-accepting chemotaxis protein PscA from Pseudomonas syringae pv. tomato (strain ATCC BAA-871 / DC3000).